The primary structure comprises 105 residues: Heat shock protein HspQ (105 aa).

The tract at residues 76–105 (EMRDEHPEQPSMDELARTIRKQLQAPRLRN) is disordered.

The protein belongs to the HspQ family.

The protein localises to the cytoplasm. Involved in the degradation of certain denaturated proteins, including DnaA, during heat shock stress. In Salmonella agona (strain SL483), this protein is Heat shock protein HspQ.